A 180-amino-acid polypeptide reads, in one-letter code: Protein YOP1 (180 aa).

An N-acetylserine modification is found at serine 2. The tract at residues 2–17 is interaction with YIP1; that stretch reads SEYASSIHSQMKQFDT. Residues 2-35 are Cytoplasmic-facing; it reads SEYASSIHSQMKQFDTKYSGNRILQQLENKTNLP. A helical transmembrane segment spans residues 36–55; that stretch reads KSYLVAGLGFAYLLLIFINV. The Lumenal portion of the chain corresponds to 56 to 57; sequence GG. A helical membrane pass occupies residues 58 to 78; that stretch reads VGEILSNFAGFVLPAYLSLVA. Residues 79 to 88 are Cytoplasmic-facing; that stretch reads LKTPTSTDDT. A helical membrane pass occupies residues 89 to 105; the sequence is QLLTYWIVFSFLSVIEF. Over 106–108 the chain is Lumenal; that stretch reads WSK. The helical transmembrane segment at 109 to 127 threads the bilayer; it reads AILYLIPFYWFLKTVFLIY. The Cytoplasmic segment spans residues 128–180; the sequence is IALPQTGGARMIYQKIVAPLTDRYILRDVSKTEKDEIRASVNEASKATGASVH.

This sequence belongs to the DP1 family. In terms of assembly, oligomer. Interacts with YIP1.

It is found in the endoplasmic reticulum membrane. It localises to the golgi apparatus membrane. Functionally, required to generate and maintain the structure of the tubular endoplasmic reticulum network and the vacuole. Induces high curvature in membranes and causes membrane tubule formation. Involved in membrane/vesicle trafficking. The polypeptide is Protein YOP1 (YOP1) (Saccharomyces cerevisiae (strain ATCC 204508 / S288c) (Baker's yeast)).